The following is a 432-amino-acid chain: Serine/threonine-protein kinase Sgk1 (432 aa).

The tract at residues 67–93 is disordered; the sequence is PELMNANPSPPPSPSQQINLGPSSNPH. Polar residues predominate over residues 82–92; that stretch reads QQINLGPSSNP. The Protein kinase domain occupies 99–356; the sequence is FHFLKVIGKG…FTEIKNHIFF (258 aa). ATP contacts are provided by residues 105–113 and lysine 128; that span reads IGKGSFGKV. The Proton acceptor role is filled by aspartate 223. The AGC-kinase C-terminal domain occupies 357–432; that stretch reads SPINWDDLIN…SYAPPVDSFL (76 aa).

This sequence belongs to the protein kinase superfamily. AGC Ser/Thr protein kinase family.

It is found in the cytoplasm. Its subcellular location is the nucleus. It localises to the endoplasmic reticulum. The enzyme catalyses L-seryl-[protein] + ATP = O-phospho-L-seryl-[protein] + ADP + H(+). It carries out the reaction L-threonyl-[protein] + ATP = O-phospho-L-threonyl-[protein] + ADP + H(+). Protein kinase that may play an important role in cellular stress response. May be involved in the regulation of processes such as cell survival, neuronal excitability and renal sodium excretion. In Gallus gallus (Chicken), this protein is Serine/threonine-protein kinase Sgk1 (SGK1).